Consider the following 64-residue polypeptide: Putative neurotoxin 4 (64 aa).

An N-terminal signal peptide occupies residues 1-18; the sequence is MKSKFAVLFFTLFLLALA.

It belongs to the scolopendra neurotoxin 6 family. Contains 3 disulfide bonds. Expressed by the venom gland.

It is found in the secreted. The chain is Putative neurotoxin 4 from Scolopendra mutilans (Chinese red-headed centipede).